Reading from the N-terminus, the 360-residue chain is MNVKPATAKISSHALKQNLEIIKQKAPNSKIIAVVKANAYGHGVVFVASTLEQNVDCFGVARLEEALALRSNGITKPILLLEGFFNEQDLPILAVNNIETVVHNHEQLDALKRANLPSPIKVWLKIDTGMHRLGVALDEVDYFYQELKKLPQIQPHLGFVSHFSRADELESDYTQLQINRFLSVTKDKQGERTIAASGGILFWPKSHLECIRPGIIMYGISPTDTIGKEFGLTPVMNLTSSLIAVRHHKQGDPVGYGGIWTSPRDTKIGVVAMGYGDGYPRDVPEGTPVYLNGRLVPIVGRVSMDMLTVDLGADSQDLVGDEVILWGKELPIETVAKFTGILSYELITKLTPRVITEYVD.

The Proton acceptor; specific for D-alanine role is filled by K36. K36 is subject to N6-(pyridoxal phosphate)lysine. Residue R132 participates in substrate binding. Residue Y256 is the Proton acceptor; specific for L-alanine of the active site. Substrate is bound at residue M304.

It belongs to the alanine racemase family. Requires pyridoxal 5'-phosphate as cofactor.

It carries out the reaction L-alanine = D-alanine. Its pathway is amino-acid biosynthesis; D-alanine biosynthesis; D-alanine from L-alanine: step 1/1. Functionally, catalyzes the interconversion of L-alanine and D-alanine. May also act on other amino acids. The protein is Alanine racemase (alr) of Haemophilus influenzae (strain ATCC 51907 / DSM 11121 / KW20 / Rd).